Here is a 124-residue protein sequence, read N- to C-terminus: Large ribosomal subunit protein bL17 (124 aa).

It belongs to the bacterial ribosomal protein bL17 family. In terms of assembly, part of the 50S ribosomal subunit. Contacts protein L32.

In Trichlorobacter lovleyi (strain ATCC BAA-1151 / DSM 17278 / SZ) (Geobacter lovleyi), this protein is Large ribosomal subunit protein bL17.